Reading from the N-terminus, the 325-residue chain is Fatty acid synthase alpha subunit hexA (325 aa).

Residue Asp-209 participates in Mg(2+) binding. Residues 209 to 211, 255 to 265, 279 to 282, and 301 to 303 each bind acetyl-CoA; these read DLV, EAVFKCLHTQT, KSDN, and ISH. Ser-302 contributes to the Mg(2+) binding site.

This sequence belongs to the thiolase-like superfamily. Fungal fatty acid synthetase subunit alpha family. As to quaternary structure, [Alpha(6)beta(6)] hexamers of two multifunctional subunits (alpha and beta). Post-translationally, 4'-phosphopantetheine is transferred from CoA to a specific serine of the acyl carrier domain by the C-terminal PPT domain. This modification is essential for activity because fatty acids are bound in thioester linkage to the sulfhydryl of the prosthetic group.

It carries out the reaction acetyl-CoA + n malonyl-CoA + 2n NADPH + 4n H(+) = a long-chain-acyl-CoA + n CoA + n CO2 + 2n NADP(+).. The enzyme catalyses a fatty acyl-[ACP] + malonyl-[ACP] + H(+) = a 3-oxoacyl-[ACP] + holo-[ACP] + CO2. It catalyses the reaction a (3R)-hydroxyacyl-[ACP] + NADP(+) = a 3-oxoacyl-[ACP] + NADPH + H(+). Its pathway is mycotoxin biosynthesis. In terms of biological role, fatty acid synthase alpha subunit; part of the fragmented gene cluster that mediates the biosynthesis of dothistromin (DOTH), a polyketide toxin very similar in structure to the aflatoxin precursor, versicolorin B. The first step of the pathway is the conversion of acetate to norsolorinic acid (NOR) and requires the fatty acid synthase subunits hexA and hexB, as well as the polyketide synthase pksA. PksA combines a hexanoyl starter unit and 7 malonyl-CoA extender units to synthesize the precursor NOR. The hexanoyl starter unit is provided to the acyl-carrier protein (ACP) domain by the fungal fatty acid synthase hexA/hexB. The second step is the conversion of NOR to averantin (AVN) and requires the norsolorinic acid ketoreductase nor1, which catalyzes the dehydration of norsolorinic acid to form (1'S)-averantin. The cytochrome P450 monooxygenase avnA then catalyzes the hydroxylation of AVN to 5'hydroxyaverantin (HAVN). The next step is performed by adhA that transforms HAVN to averufin (AVF). Averufin might then be converted to hydroxyversicolorone by cypX and avfA. Hydroxyversicolorone is further converted versiconal hemiacetal acetate (VHA) by moxY. VHA is then the substrate for the versiconal hemiacetal acetate esterase est1 to yield versiconal (VAL). Versicolorin B synthase vbsA then converts VAL to versicolorin B (VERB) by closing the bisfuran ring. Then, the activity of the versicolorin B desaturase verB leads to versicolorin A (VERA). DotB, a predicted chloroperoxidase, may perform epoxidation of the A-ring of VERA. Alternatively, a cytochrome P450, such as cypX or avnA could catalyze this step. It is also possible that another, uncharacterized, cytochrome P450 enzyme is responsible for this step. Opening of the epoxide could potentially be achieved by the epoxide hydrolase epoA. However, epoA seems not to be required for DOTH biosynthesis, but other epoxide hydrolases may have the ability to complement this hydrolysis. Alternatively, opening of the epoxide ring could be achieved non-enzymatically. The next step is the deoxygenation of ring A to yield the 5,8-dihydroxyanthraquinone which is most likely catalyzed by the NADPH dehydrogenase encoded by ver1. The last stages of DOTH biosynthesis are proposed to involve hydroxylation of the bisfuran. OrdB and norB might have oxidative roles here. An alternative possibility is that cytochrome P450 monoogenases such as avnA and cypX might perform these steps in addition to previously proposed steps. The polypeptide is Fatty acid synthase alpha subunit hexA (Dothistroma septosporum (Red band needle blight fungus)).